Reading from the N-terminus, the 98-residue chain is Integration host factor subunit alpha (98 aa).

This sequence belongs to the bacterial histone-like protein family. Heterodimer of an alpha and a beta chain.

In terms of biological role, this protein is one of the two subunits of integration host factor, a specific DNA-binding protein that functions in genetic recombination as well as in transcriptional and translational control. The protein is Integration host factor subunit alpha of Marinomonas sp. (strain MWYL1).